The sequence spans 216 residues: MLIFKICFYRLLPLSVLLLAACSALKAPESSSVLKNHIASDEWQEYQHQLKQIQQFQIQGSVAYFSDEKKAYARFFWQQYSPKNYHLLLLSPLGQTEFELKVTNGRVDMAKYKDQGEIKGDAEEILFKLTGIPIPLEHLSRWIVGASSDADEIILNRQSRLKTLIHHKKEQTWKVYYQAYNTKITPILPERLELYLISPNHQDQRMTLKINHWILK.

The N-terminal stretch at 1-21 is a signal peptide; the sequence is MLIFKICFYRLLPLSVLLLAA. The N-palmitoyl cysteine moiety is linked to residue C22. The S-diacylglycerol cysteine moiety is linked to residue C22.

This sequence belongs to the LolB family. In terms of assembly, monomer.

It localises to the cell outer membrane. In terms of biological role, plays a critical role in the incorporation of lipoproteins in the outer membrane after they are released by the LolA protein. The sequence is that of Outer-membrane lipoprotein LolB from Hamiltonella defensa subsp. Acyrthosiphon pisum (strain 5AT).